A 719-amino-acid polypeptide reads, in one-letter code: Ribosomal RNA large subunit methyltransferase K/L (719 aa).

The THUMP domain occupies 43 to 154 (TQYRVLLWTR…REELVISLDL (112 aa)).

It belongs to the methyltransferase superfamily. RlmKL family.

The protein resides in the cytoplasm. It catalyses the reaction guanosine(2445) in 23S rRNA + S-adenosyl-L-methionine = N(2)-methylguanosine(2445) in 23S rRNA + S-adenosyl-L-homocysteine + H(+). The catalysed reaction is guanosine(2069) in 23S rRNA + S-adenosyl-L-methionine = N(2)-methylguanosine(2069) in 23S rRNA + S-adenosyl-L-homocysteine + H(+). Its function is as follows. Specifically methylates the guanine in position 2445 (m2G2445) and the guanine in position 2069 (m7G2069) of 23S rRNA. This Pasteurella multocida (strain Pm70) protein is Ribosomal RNA large subunit methyltransferase K/L.